Here is a 981-residue protein sequence, read N- to C-terminus: Transcription factor TAC1 (981 aa).

Polar residues predominate over residues 1-29 (MDTSSSSGTHPSTFNNLTKQQELTGNDPN). The tract at residues 1–33 (MDTSSSSGTHPSTFNNLTKQQELTGNDPNDTNR) is disordered. A DNA-binding region (zn(2)-C6 fungal-type) is located at residues 40–68 (CDSCRRKKIKCNGSYPCGNCIQAKNTSNC). 3 disordered regions span residues 74 to 106 (PVRK…TFSG), 165 to 199 (HSNS…TSHS), and 868 to 902 (LRDN…SNST). Residues 165–177 (HSNSSMFNNNSLS) show a composition bias toward low complexity. Residues 868 to 880 (LRDNSTNHGQNNM) show a composition bias toward polar residues. The segment covering 881–902 (NPSPTITNNTYNSNINTGSNST) has biased composition (low complexity).

Post-translationally, phosphorylated. Phosphorylation leads to hyperactivation.

Its subcellular location is the nucleus. Drugs such as farnesol and 1-dodecanol are able to hyperactivate TAC1 probably via phosphorylation by the Mediator complex. Transcriptional activator of drug-responsive genes including the ABC-type transporters CDR1 and CDR2, as well as HSP12 and RTA3. Binds the cis-acting regulatory drug-responsive elements (DREs) with the consensus sequence 5'-CGGAWATCGGATATTTTTTT-3' in the promoters of target genes. This Candida albicans (strain SC5314 / ATCC MYA-2876) (Yeast) protein is Transcription factor TAC1.